The sequence spans 228 residues: Cytochrome c oxidase subunit 2 (228 aa).

At 1–26 (MATWNNLNLQNGASPLMEQIIFFHDH) the chain is on the mitochondrial intermembrane side. Residues 27-48 (TLIILIMITILVGYLMINLFFN) traverse the membrane as a helical segment. Topologically, residues 49–62 (KYINRFLLEGQMIE) are mitochondrial matrix. The helical transmembrane segment at 63–82 (LIWTILPAITLIFIALPSLR) threads the bilayer. The Mitochondrial intermembrane segment spans residues 83-228 (LLYLLDELNN…FIKWINNYSS (146 aa)). Positions 161, 196, 198, 200, 204, and 207 each coordinate Cu cation. Glu-198 provides a ligand contact to Mg(2+).

It belongs to the cytochrome c oxidase subunit 2 family. In terms of assembly, component of the cytochrome c oxidase (complex IV, CIV), a multisubunit enzyme composed of a catalytic core of 3 subunits and several supernumerary subunits. The complex exists as a monomer or a dimer and forms supercomplexes (SCs) in the inner mitochondrial membrane with ubiquinol-cytochrome c oxidoreductase (cytochrome b-c1 complex, complex III, CIII). Cu cation is required as a cofactor.

The protein localises to the mitochondrion inner membrane. The catalysed reaction is 4 Fe(II)-[cytochrome c] + O2 + 8 H(+)(in) = 4 Fe(III)-[cytochrome c] + 2 H2O + 4 H(+)(out). Functionally, component of the cytochrome c oxidase, the last enzyme in the mitochondrial electron transport chain which drives oxidative phosphorylation. The respiratory chain contains 3 multisubunit complexes succinate dehydrogenase (complex II, CII), ubiquinol-cytochrome c oxidoreductase (cytochrome b-c1 complex, complex III, CIII) and cytochrome c oxidase (complex IV, CIV), that cooperate to transfer electrons derived from NADH and succinate to molecular oxygen, creating an electrochemical gradient over the inner membrane that drives transmembrane transport and the ATP synthase. Cytochrome c oxidase is the component of the respiratory chain that catalyzes the reduction of oxygen to water. Electrons originating from reduced cytochrome c in the intermembrane space (IMS) are transferred via the dinuclear copper A center (CU(A)) of subunit 2 and heme A of subunit 1 to the active site in subunit 1, a binuclear center (BNC) formed by heme A3 and copper B (CU(B)). The BNC reduces molecular oxygen to 2 water molecules using 4 electrons from cytochrome c in the IMS and 4 protons from the mitochondrial matrix. This Yponomeuta malinellus (European small ermine moth) protein is Cytochrome c oxidase subunit 2 (COII).